Here is a 174-residue protein sequence, read N- to C-terminus: Vimentin-type intermediate filament-associated coiled-coil protein (174 aa).

The stretch at 7 to 97 (LQIREANAHL…DQRDQMIQQL (91 aa)) forms a coiled coil. The tract at residues 128–174 (GPLPASHSHRAQLLPDGPGPPLGNNMGKEEGQDDQDDQQPAVFGTTV) is disordered.

It localises to the cytoplasm. The protein is Vimentin-type intermediate filament-associated coiled-coil protein (Vmac) of Mus musculus (Mouse).